A 300-amino-acid polypeptide reads, in one-letter code: NAD kinase (300 aa).

Aspartate 75 serves as the catalytic Proton acceptor. Residues aspartate 75–glycine 76, asparagine 149–aspartate 150, arginine 177, aspartate 179, threonine 190–serine 195, alanine 214, and glutamine 248 each bind NAD(+).

The protein belongs to the NAD kinase family. It depends on a divalent metal cation as a cofactor.

It is found in the cytoplasm. The catalysed reaction is NAD(+) + ATP = ADP + NADP(+) + H(+). Functionally, involved in the regulation of the intracellular balance of NAD and NADP, and is a key enzyme in the biosynthesis of NADP. Catalyzes specifically the phosphorylation on 2'-hydroxyl of the adenosine moiety of NAD to yield NADP. The sequence is that of NAD kinase from Burkholderia cenocepacia (strain HI2424).